The following is a 1099-amino-acid chain: Exonuclease/helicase subunit RexB (1099 aa).

[4Fe-4S] cluster is bound by residues Cys-766, Cys-1056, Cys-1059, and Cys-1065.

It belongs to the helicase family. AddB/RexB type 2 subfamily. As to quaternary structure, heterodimer of RexA (AddA) and RexB. It depends on Mg(2+) as a cofactor. [4Fe-4S] cluster is required as a cofactor.

The heterodimer acts both as an ATP-dependent DNA helicase and an ATP-dependent, dual-direction single-stranded exonuclease. Recognizes the L.lactis chi site (5'-GCGCGTG-3'), which stimulates homologous recombination. This subunit has 5'-&gt;3' exonuclease activity. In terms of biological role, the heterodimer acts as both an ATP-dependent DNA helicase and an ATP-dependent, dual-direction single-stranded exonuclease. Recognizes the chi site generating a DNA molecule suitable for the initiation of homologous recombination. This subunit has 5' -&gt; 3' nuclease activity but not helicase activity. This is Exonuclease/helicase subunit RexB from Lactococcus lactis subsp. cremoris (strain MG1363).